A 433-amino-acid polypeptide reads, in one-letter code: tRNA-queuosine alpha-mannosyltransferase (433 aa).

The segment at 194-244 (PAAKSHIQTSSPSSYPDVEPPEKMLNVAGTNQSHEPTSVTPHQETASPLCG) is disordered. Residues 221 to 239 (AGTNQSHEPTSVTPHQETA) are compositionally biased toward polar residues.

This sequence belongs to the glycosyltransferase group 1 family. Glycosyltransferase 4 subfamily.

The protein resides in the cytoplasm. Its subcellular location is the nucleus. The enzyme catalyses queuosine(34) in tRNA(Asp) + GDP-alpha-D-mannose = O-4''-alpha-D-mannosylqueuosine(34) in tRNA(Asp) + GDP + H(+). Functionally, glycosyltransferase that specifically catalyzes mannosylation of cytoplasmic tRNA(Asp) modified with queuosine at position 34 (queuosine(34)). Mannosylates the cyclopentene moiety of queuosine(34) in tRNA(Asp) to form mannosyl-queuosine(34). Mannosylation of queuosine(34) in tRNA(Asp) is required to slow-down elongation at cognate codons, GAC and GAU, thereby regulating protein translation. The protein is tRNA-queuosine alpha-mannosyltransferase (gtdc1) of Danio rerio (Zebrafish).